The primary structure comprises 170 residues: Protein SOB FIVE-LIKE 5 (170 aa).

An SOFL-A motif is present at residues 10–15 (SGWTLY). The disordered stretch occupies residues 17 to 78 (DQSVSSPSPS…GPRNISEEDS (62 aa)). Positions 35–44 (DSRRRSKDSW) are enriched in basic and acidic residues. The SOFL-B signature appears at 61–70 (SMISDASSGP). The Nuclear localization signal motif lies at 79–86 (VKKINIVG).

Belongs to the SOFL plant protein family. In terms of tissue distribution, expressed in seedlings, roots, flowers and siliques. Barely detectable in leaves.

It is found in the cytoplasm. The protein localises to the nucleus. Functionally, involved in cytokinin-mediated development. The sequence is that of Protein SOB FIVE-LIKE 5 from Arabidopsis thaliana (Mouse-ear cress).